The chain runs to 162 residues: 6,7-dimethyl-8-ribityllumazine synthase (162 aa).

5-amino-6-(D-ribitylamino)uracil is bound by residues phenylalanine 23, 61 to 63 (AYE), and 85 to 87 (AVI). Position 90–91 (90–91 (DT)) interacts with (2S)-2-hydroxy-3-oxobutyl phosphate. Histidine 93 functions as the Proton donor in the catalytic mechanism. Phenylalanine 118 lines the 5-amino-6-(D-ribitylamino)uracil pocket. Residue arginine 132 coordinates (2S)-2-hydroxy-3-oxobutyl phosphate.

This sequence belongs to the DMRL synthase family.

It carries out the reaction (2S)-2-hydroxy-3-oxobutyl phosphate + 5-amino-6-(D-ribitylamino)uracil = 6,7-dimethyl-8-(1-D-ribityl)lumazine + phosphate + 2 H2O + H(+). It functions in the pathway cofactor biosynthesis; riboflavin biosynthesis; riboflavin from 2-hydroxy-3-oxobutyl phosphate and 5-amino-6-(D-ribitylamino)uracil: step 1/2. Functionally, catalyzes the formation of 6,7-dimethyl-8-ribityllumazine by condensation of 5-amino-6-(D-ribitylamino)uracil with 3,4-dihydroxy-2-butanone 4-phosphate. This is the penultimate step in the biosynthesis of riboflavin. This chain is 6,7-dimethyl-8-ribityllumazine synthase, found in Synechococcus sp. (strain CC9902).